We begin with the raw amino-acid sequence, 203 residues long: Auxin-responsive protein IAA4 (203 aa).

The interval 1–31 (MEECKGGGMSPSSSMDSSTHPALSTTSSAAT) is disordered. Residues 10 to 31 (SPSSSMDSSTHPALSTTSSAAT) are compositionally biased toward low complexity. The short motif at 40–44 (LRLGL) is the EAR-like (transcriptional repression) element. Residues 108-202 (TLFVKVYMEG…KKLRIARMDK (95 aa)) enclose the PB1 domain.

The protein belongs to the Aux/IAA family. As to quaternary structure, homodimers and heterodimers.

It is found in the nucleus. In terms of biological role, aux/IAA proteins are short-lived transcriptional factors that function as repressors of early auxin response genes at low auxin concentrations. The polypeptide is Auxin-responsive protein IAA4 (IAA4) (Oryza sativa subsp. japonica (Rice)).